Consider the following 261-residue polypeptide: Ribonuclease PH (261 aa).

Phosphate-binding positions include Arg88 and 126–128; that span reads GTR. Positions 242 to 261 are disordered; it reads PYPGVLPEPKNPEPKKKFGA. Over residues 251–261 the composition is skewed to basic and acidic residues; that stretch reads KNPEPKKKFGA.

This sequence belongs to the RNase PH family. Homohexameric ring arranged as a trimer of dimers.

It carries out the reaction tRNA(n+1) + phosphate = tRNA(n) + a ribonucleoside 5'-diphosphate. Functionally, phosphorolytic 3'-5' exoribonuclease that plays an important role in tRNA 3'-end maturation. Removes nucleotide residues following the 3'-CCA terminus of tRNAs; can also add nucleotides to the ends of RNA molecules by using nucleoside diphosphates as substrates, but this may not be physiologically important. Probably plays a role in initiation of 16S rRNA degradation (leading to ribosome degradation) during starvation. This is Ribonuclease PH from Rhodococcus erythropolis (strain PR4 / NBRC 100887).